Here is a 188-residue protein sequence, read N- to C-terminus: Trafficking protein particle complex subunit 5 (188 aa).

Serine 10 bears the Phosphoserine mark.

Belongs to the TRAPP small subunits family. BET3 subfamily. In terms of assembly, component of the multisubunit TRAPP (transport protein particle) complex, which includes at least TRAPPC2, TRAPPC2L, TRAPPC3, TRAPPC3L, TRAPPC4, TRAPPC5, TRAPPC8, TRAPPC9, TRAPPC10, TRAPPC11 and TRAPPC12.

It localises to the golgi apparatus. Its subcellular location is the cis-Golgi network. It is found in the endoplasmic reticulum. In terms of biological role, may play a role in vesicular transport from endoplasmic reticulum to Golgi. This Mus musculus (Mouse) protein is Trafficking protein particle complex subunit 5 (Trappc5).